Here is a 257-residue protein sequence, read N- to C-terminus: Putative hydro-lyase Bcen2424_3550 (257 aa).

This sequence belongs to the D-glutamate cyclase family.

This is Putative hydro-lyase Bcen2424_3550 from Burkholderia cenocepacia (strain HI2424).